The chain runs to 677 residues: Electrogenic aspartate/glutamate antiporter SLC25A12, mitochondrial (677 aa).

A2 is modified (N-acetylalanine). The interval 2 to 294 is regulatory N-terminal domain; sequence AVKVHTTKRG…TLADIERIAP (293 aa). Topologically, residues 2 to 329 are mitochondrial intermembrane; that stretch reads AVKVHTTKRG…WLQIAESAYR (328 aa). EF-hand domains are found at residues 40–85, 86–121, 122–156, and 157–192; these read VQRY…SVLC, APDS…TIIH, HHIP…FLQE, and LQLE…IRSH. Residues D65, T67, D69, L71, and E76 each contribute to the Ca(2+) site. Residues 295-310 are linker loop domain; it reads LAEGALPYNLAELQRQ. A carrier domain region spans residues 320–612; the sequence is WLQIAESAYR…RWFYIDFGGL (293 aa). Solcar repeat units follow at residues 324–416, 424–508, and 516–604; these read AESA…VRDK, IPLP…CKLL, and VGGI…LQRW. Residues 330–347 form a helical membrane-spanning segment; sequence FTLGSVAGAVGATAVYPI. The Mitochondrial matrix segment spans residues 348-390; sequence DLVKTRMQNQRGTGSVVGELMYKNSFDCFKKVLRYEGFFGLYR. The helical transmembrane segment at 391-410 threads the bilayer; sequence GLIPQLIGVAPEKAIKLTVN. Topologically, residues 411–433 are mitochondrial intermembrane; sequence DFVRDKFTKRDGSIPLPAEILAG. The chain crosses the membrane as a helical span at residues 434–447; sequence GCAGGSQVIFTNPL. Over 448–482 the chain is Mitochondrial matrix; the sequence is EIVKIRLQVAGEITTGPRVSALNVLQDLGLFGLYK. The chain crosses the membrane as a helical span at residues 483–502; the sequence is GAKACFLRDIPFSAIYFPVY. Over 503–521 the chain is Mitochondrial intermembrane; sequence AHCKLLLADENGRVGGINL. A helical membrane pass occupies residues 522–539; that stretch reads LTAGALAGVPAASLVTPA. Topologically, residues 540–578 are mitochondrial matrix; it reads DVIKTRLQVAARAGQTTYSGVVDCFRKILREEGPSAFWK. Residues 579-598 form a helical membrane-spanning segment; sequence GTAARVFRSSPQFGVTLVTY. At 599–677 the chain is on the mitochondrial intermembrane side; sequence ELLQRWFYID…AQPKAAAAAQ (79 aa). Positions 613-677 are C-terminal domain; the sequence is KPSGSEPTPK…AQPKAAAAAQ (65 aa).

It belongs to the mitochondrial carrier (TC 2.A.29) family. In terms of assembly, homodimer (via N-terminus).

It localises to the mitochondrion inner membrane. The catalysed reaction is L-aspartate(in) + L-glutamate(out) + H(+)(out) = L-aspartate(out) + L-glutamate(in) + H(+)(in). It carries out the reaction 3-sulfino-L-alanine(out) + L-glutamate(in) + H(+)(in) = 3-sulfino-L-alanine(in) + L-glutamate(out) + H(+)(out). The enzyme catalyses 3-sulfino-L-alanine(out) + L-aspartate(in) = 3-sulfino-L-alanine(in) + L-aspartate(out). Its function is as follows. Mitochondrial electrogenic aspartate/glutamate antiporter that favors efflux of aspartate and entry of glutamate and proton within the mitochondria as part of the malate-aspartate shuttle. Also mediates the uptake of L-cysteinesulfinate (3-sulfino-L-alanine) by mitochondria in exchange of L-glutamate and proton. Can also exchange L-cysteinesulfinate with aspartate in their anionic form without any proton translocation. Lacks transport activity towards L-glutamine or gamma-aminobutyric acid (GABA). The sequence is that of Electrogenic aspartate/glutamate antiporter SLC25A12, mitochondrial from Mus musculus (Mouse).